The chain runs to 430 residues: Ribosomal protein uS12 methylthiotransferase RimO (430 aa).

Residues methionine 1–proline 116 enclose the MTTase N-terminal domain. Residues cysteine 10, cysteine 46, cysteine 79, cysteine 146, cysteine 150, and cysteine 153 each contribute to the [4Fe-4S] cluster site. One can recognise a Radical SAM core domain in the interval serine 132 to glutamate 362. Positions lysine 365–isoleucine 430 constitute a TRAM domain.

It belongs to the methylthiotransferase family. RimO subfamily. [4Fe-4S] cluster is required as a cofactor.

The protein resides in the cytoplasm. It carries out the reaction L-aspartate(89)-[ribosomal protein uS12]-hydrogen + (sulfur carrier)-SH + AH2 + 2 S-adenosyl-L-methionine = 3-methylsulfanyl-L-aspartate(89)-[ribosomal protein uS12]-hydrogen + (sulfur carrier)-H + 5'-deoxyadenosine + L-methionine + A + S-adenosyl-L-homocysteine + 2 H(+). In terms of biological role, catalyzes the methylthiolation of an aspartic acid residue of ribosomal protein uS12. The chain is Ribosomal protein uS12 methylthiotransferase RimO from Pseudothermotoga lettingae (strain ATCC BAA-301 / DSM 14385 / NBRC 107922 / TMO) (Thermotoga lettingae).